The chain runs to 395 residues: Cyclic AMP-responsive element-binding protein 3-like protein 4 (395 aa).

Over 1 to 295 (MDLGIPDLLD…QTSNKAAQTS (295 aa)) the chain is Cytoplasmic. The interval 82–108 (EASPGSDSGISEDPCHPDSPPAPRATS) is disordered. Residues 217 to 280 (VLKKVRRKIR…ISLVAQLRQL (64 aa)) enclose the bZIP domain. The interval 219 to 248 (KKVRRKIRNKQSAQDSRRRKKEYIDGLESR) is basic motif. A leucine-zipper region spans residues 259–280 (LQKKVQELERHNISLVAQLRQL). The chain crosses the membrane as a helical; Signal-anchor for type II membrane protein span at residues 296 to 316 (TCVLILLFSLALIILPSFSPF). Residues 317–395 (QSRPEAGSED…IRSVLHADEM (79 aa)) are Lumenal-facing. The disordered stretch occupies residues 355–395 (RLREPPGAKDANGSTRTLLEKMGGKPRPSGRIRSVLHADEM). N-linked (GlcNAc...) asparagine glycosylation occurs at Asn366.

The protein belongs to the bZIP family. ATF subfamily. Binds DNA as a dimer. N-glycosylated in the C-terminal region. In terms of processing, controlled by regulated intramembrane proteolysis (RIP). Following ER stress a fragment containing the cytoplasmic transcription factor domain is released by proteolysis. The cleavage seems to be performed sequentially by site-1 and site-2 proteases (PS1 and PS2). PS1 cleavage may be suppressed by a determinant in the C-terminal region. According to PubMed:11830526, exclusively expressed in the prostate. Expressed in breast and prostate cancer cell lines. Expressed in prostatic luminal epithelial cells (at protein level). Expression is significantly more abundant in prostate cancer than in benign prostatic tissue (prostatic hyperplasia). According to PubMed:12111373, also expressed in brain, pancreas and skeletal muscle, and at lower levels in small intestine, testis, leukocyte and thymus.

It is found in the endoplasmic reticulum membrane. Its subcellular location is the golgi apparatus membrane. The protein resides in the nucleus. In terms of biological role, transcriptional activator that may play a role in the unfolded protein response. Binds to the UPR element (UPRE) but not to CRE element. Preferentially binds DNA with to the consensus sequence 5'-T[GT]ACGT[GA][GT]-3' and has transcriptional activation activity from UPRE. Binds to NF-kappa-B site and has transcriptional activation activity from NF-kappa-B-containing regulatory elements. The protein is Cyclic AMP-responsive element-binding protein 3-like protein 4 (CREB3L4) of Homo sapiens (Human).